Consider the following 636-residue polypeptide: Tumor protein p73 (636 aa).

The segment at 1-46 is transactivation; that stretch reads MAQSTATSPDGGTTFEHLWSSLEPDSTYFDLPQSSRGNNEVVGGTD. Residue Thr27 is modified to Phosphothreonine; by PLK1. Residue Tyr28 is modified to Phosphotyrosine; by SRC and HCK. Residues 78-104 are disordered; that stretch reads RAASASPYTPEHAASVPTHSPYAQPSS. Positions 94–104 are enriched in polar residues; sequence PTHSPYAQPSS. Phosphotyrosine; by ABL1 is present on Tyr99. The DNA-binding stretch occupies residues 131–310; it reads FQQSSTAKSA…DRKADEDHYR (180 aa). Residues Cys194, His197, Cys258, and Cys262 each contribute to the Zn(2+) site. The tract at residues 314-345 is disordered; the sequence is ALNESSAKNGAASKRAFKQSPPAVPALGAGVK. The tract at residues 345–380 is interaction with HIPK2; the sequence is KKRRHGDEDTYYLQVRGRENFEILMKLKESLELMEL. Residues 345 to 386 are oligomerization; sequence KKRRHGDEDTYYLQVRGRENFEILMKLKESLELMELVPQPLV. A PPxY motif motif is present at residues 483–487; it reads PPPPY. The 67-residue stretch at 485–551 folds into the SAM domain; the sequence is PPYHADPSLV…WRGLQDLKQG (67 aa). Residue Lys627 forms a Glycyl lysine isopeptide (Lys-Gly) (interchain with G-Cter in SUMO); in isoform Alpha linkage. Lys627 participates in a covalent cross-link: Glycyl lysine isopeptide (Lys-Gly) (interchain with G-Cter in SUMO2).

The protein belongs to the p53 family. In terms of assembly, found in a complex with p53/TP53 and CABLES1. The C-terminal oligomerization domain binds to the ABL1 tyrosine kinase SH3 domain. Interacts with HECW2. Isoform Beta interacts homotypically and with p53/TP53, whereas isoform Alpha does not. Isoform Gamma interacts homotypically and with all p73 isoforms. Isoform Delta interacts with isoform Gamma, isoform Alpha, and homotypically. Isoforms Alpha and Beta interact with HIPK2. Isoform Alpha interacts with RANBP9. Isoform Beta interacts with WWOX. Interacts (via SAM domain) with FBXO45 (via B30.2/SPRY domain). Interacts with YAP1 (phosphorylated form). Interacts with HCK (via SH3 domain); this inhibits TP73 activity and degradation. Interacts (via SAM domain) with NQO1; this interaction is NADH-dependent, stabilizes TP73 in response to oxidative stress and protects it from ubiquitin-independent degradation by the 20S proteasome. (Microbial infection) Interacts with Epstein-Barr virus protein EBNA6; this interaction inhibits TP73-mediated apoptotic pathway. The cofactor is Zn(2+). Isoform alpha (but not isoform beta) is sumoylated on Lys-627, which potentiates proteasomal degradation but does not affect transcriptional activity. Phosphorylation by PLK1 and PLK3 inhibits the transcription regulator activity and pro-apoptotic function. Post-translationally, higher levels of phosphorylation seen in the brain from patients with Huntington disease. In terms of processing, polyubiquitinated by RCHY1/PIRH2; leading to its degradation by the proteasome. Expressed in striatal neurons of patients with Huntington disease (at protein level). Brain, kidney, placenta, colon, heart, liver, spleen, skeletal muscle, prostate, thymus and pancreas. Highly expressed in fetal tissue. Expressed in the respiratory epithelium.

Its subcellular location is the nucleus. The protein localises to the cytoplasm. Functionally, participates in the apoptotic response to DNA damage. Isoforms containing the transactivation domain are pro-apoptotic, isoforms lacking the domain are anti-apoptotic and block the function of p53 and transactivating p73 isoforms. May be a tumor suppressor protein. Is an activator of FOXJ1 expression. It is an essential factor for the positive regulation of lung ciliated cell differentiation. This chain is Tumor protein p73 (TP73), found in Homo sapiens (Human).